We begin with the raw amino-acid sequence, 618 residues long: Carotenoid cleavage dioxygenase 7, chloroplastic (618 aa).

A chloroplast-targeting transit peptide spans 1 to 31 (MSLPIPPKFLPPLKSPPIHHHQTPPPLAPPR). Residues 11–34 (PPLKSPPIHHHQTPPPLAPPRAAI) form a disordered region. Residues histidine 266, histidine 319, histidine 398, and histidine 612 each contribute to the Fe cation site.

Belongs to the carotenoid oxygenase family. Requires Fe(2+) as cofactor. Expressed in flowers, siliques, inflorescence stems, petiole, leaves and roots.

The protein localises to the plastid. It localises to the chloroplast. It carries out the reaction 9-cis-beta-carotene + O2 = 9-cis-10'-apo-beta-carotenal + beta-ionone. Its function is as follows. Involved in strigolactones biosynthesis by cleaving asymmetrically a variety of linear and cyclic carotenoids at the 9-10 double bond. Produces one C(13) beta-ionone and the C(27) 10'-apo-beta-carotenal. Strigolactones are hormones that inhibit tillering and shoot branching through the MAX-dependent pathway, contribute to the regulation of shoot architectural response to phosphate-limiting conditions and function as rhizosphere signal that stimulates hyphal branching of arbuscular mycorrhizal fungi and trigger seed germination of root parasitic weeds. No activity on lycopene, lutein, zeaxanthin, violaxanthin or neoxanthin. Probably not involved in abscisic acid biosynthesis. The protein is Carotenoid cleavage dioxygenase 7, chloroplastic (CCD7) of Arabidopsis thaliana (Mouse-ear cress).